The following is a 381-amino-acid chain: Creatine kinase M-type (381 aa).

One can recognise a Phosphagen kinase N-terminal domain in the interval 11–98 (KLNYSAAEEF…FDPVIEDRHG (88 aa)). The Phosphagen kinase C-terminal domain occupies 125–367 (YVLSSRVRTG…KLMVEMEKRL (243 aa)). Residues 128–132 (SSRVR), His-191, Arg-236, Arg-292, 320–325 (RGTGGV), and Asp-335 contribute to the ATP site.

The protein belongs to the ATP:guanido phosphotransferase family. As to quaternary structure, dimer of identical or non-identical chains. With MM being the major form in skeletal muscle and myocardium, MB existing in myocardium, and BB existing in many tissues, especially brain.

It is found in the cytoplasm. It catalyses the reaction creatine + ATP = N-phosphocreatine + ADP + H(+). Its function is as follows. Reversibly catalyzes the transfer of phosphate between ATP and various phosphogens (e.g. creatine phosphate). Creatine kinase isoenzymes play a central role in energy transduction in tissues with large, fluctuating energy demands, such as skeletal muscle, heart, brain and spermatozoa. The sequence is that of Creatine kinase M-type from Torpedo marmorata (Marbled electric ray).